The chain runs to 238 residues: Phosphoribosylaminoimidazole-succinocarboxamide synthase (238 aa).

This sequence belongs to the SAICAR synthetase family.

It carries out the reaction 5-amino-1-(5-phospho-D-ribosyl)imidazole-4-carboxylate + L-aspartate + ATP = (2S)-2-[5-amino-1-(5-phospho-beta-D-ribosyl)imidazole-4-carboxamido]succinate + ADP + phosphate + 2 H(+). The protein operates within purine metabolism; IMP biosynthesis via de novo pathway; 5-amino-1-(5-phospho-D-ribosyl)imidazole-4-carboxamide from 5-amino-1-(5-phospho-D-ribosyl)imidazole-4-carboxylate: step 1/2. The sequence is that of Phosphoribosylaminoimidazole-succinocarboxamide synthase from Alcanivorax borkumensis (strain ATCC 700651 / DSM 11573 / NCIMB 13689 / SK2).